The primary structure comprises 707 residues: Molybdenum cofactor sulfurase (707 aa).

K206 bears the N6-(pyridoxal phosphate)lysine mark. The active site involves C365. The region spanning 558–705 (QWLENALDMT…VEAGSAVRFF (148 aa)) is the MOSC domain.

The protein belongs to the class-V pyridoxal-phosphate-dependent aminotransferase family. MOCOS subfamily. Requires pyridoxal 5'-phosphate as cofactor.

The catalysed reaction is Mo-molybdopterin + L-cysteine + AH2 = thio-Mo-molybdopterin + L-alanine + A + H2O. It functions in the pathway cofactor biosynthesis; molybdopterin biosynthesis. Functionally, sulfurates the molybdenum cofactor. Sulfation of molybdenum is essential for xanthine dehydrogenase (XDH) and aldehyde oxidase (ADO) enzymes in which molybdenum cofactor is liganded by 1 oxygen and 1 sulfur atom in active form. The polypeptide is Molybdenum cofactor sulfurase (mocs-1) (Caenorhabditis briggsae).